The sequence spans 850 residues: Polyhomeotic-like protein 2 (850 aa).

Disordered regions lie at residues 1–79 (MENE…QYLQ), 233–314 (QQTP…RAVP), 335–386 (LPQP…DHAL), 402–436 (THVHKPGNSQQCHLPTLDTGSQNGHPEGGSHPPQR), and 528–553 (MTSGNGNSASSIAGTAPQNGENKPPQ). A compositionally biased stretch (low complexity) spans 15–32 (SVTTNTSGTNSSSGCISS). The segment at 33–56 (SGGGGGSGGRPTAPQISVYSGIPD) is interaction with BMI1. Residues 343 to 352 (PQPQFVAQQQ) are compositionally biased toward low complexity. 2 stretches are compositionally biased toward polar residues: residues 368–380 (LASVSPSLALQSS) and 402–425 (THVHKPGNSQQCHLPTLDTGSQNG). The span at 529-543 (TSGNGNSASSIAGTA) shows a compositional bias: low complexity. The HD1 motif lies at 550–579 (KPPQAIVKPQILTHVIEGFVIQEGAEPFPV). Residues lysine 590 and lysine 592 each participate in a glycyl lysine isopeptide (Lys-Gly) (interchain with G-Cter in SUMO2) cross-link. The disordered stretch occupies residues 597–624 (FLPEKPPQQDHTTTTDSEMEEPYLQESK). Residue threonine 611 is modified to Phosphothreonine. Phosphoserine is present on serine 613. Residue lysine 624 forms a Glycyl lysine isopeptide (Lys-Gly) (interchain with G-Cter in SUMO2) linkage. The FCS-type zinc finger occupies 625–659 (EEGTPLKLKCELCGRVDFAYKFKRSKRFCSMACAK). 4 residues coordinate Zn(2+): cysteine 634, cysteine 637, cysteine 653, and cysteine 657. 2 disordered regions span residues 676–712 (RSKLQKAGTTTHNRRRASKASLPTLTKDTKKQPSGTV) and 725–764 (SQEDSSRCSDNSSYEEPLSPISASSSTSRRRQGQRDLDLP). A Glycyl lysine isopeptide (Lys-Gly) (interchain with G-Cter in SUMO2) cross-link involves residue lysine 694. Over residues 696–712 (SLPTLTKDTKKQPSGTV) the composition is skewed to polar residues. Serine 743 bears the Phosphoserine mark. An SAM domain is found at 786-850 (WNVEDVYEFI…YARISMLKDS (65 aa)). A Glycyl lysine isopeptide (Lys-Gly) (interchain with G-Cter in SUMO2) cross-link involves residue lysine 839.

In terms of assembly, component of a PRC1-like complex. Interacts with CBX4. Interacts with BMI1, PCGF2, PHC1 and RNF2. Interacts with CHTOP. Interacts with the N-terminal region of the SP1 transcription factor and with MAPKAPK2. Interacts with SAMD7. Interacts with SAMD11. Isoform 2 is ubiquitously expressed in embryos and adult tissues at much higher level than isoform 1.

It localises to the nucleus. In terms of biological role, component of a Polycomb group (PcG) multiprotein PRC1-like complex, a complex class required to maintain the transcriptionally repressive state of many genes, including Hox genes, throughout development. PcG PRC1 complex acts via chromatin remodeling and modification of histones; it mediates monoubiquitination of histone H2A 'Lys-119', rendering chromatin heritably changed in its expressibility. The polypeptide is Polyhomeotic-like protein 2 (Phc2) (Mus musculus (Mouse)).